A 223-amino-acid chain; its full sequence is Large ribosomal subunit protein uL3 (223 aa).

A disordered region spans residues 137–157; sequence GRASHGNSRSHNVPGSIGMAQ. Gln157 carries the post-translational modification N5-methylglutamine.

This sequence belongs to the universal ribosomal protein uL3 family. In terms of assembly, part of the 50S ribosomal subunit. Forms a cluster with proteins L14 and L19. Methylated by PrmB.

In terms of biological role, one of the primary rRNA binding proteins, it binds directly near the 3'-end of the 23S rRNA, where it nucleates assembly of the 50S subunit. This is Large ribosomal subunit protein uL3 from Burkholderia pseudomallei (strain 1106a).